The sequence spans 562 residues: Urease subunit alpha (562 aa).

The Urease domain occupies 131–562; it reads GGMDCHIHFI…LPMAQRYFLF (432 aa). Histidine 136, histidine 138, and lysine 219 together coordinate Ni(2+). The residue at position 219 (lysine 219) is an N6-carboxylysine. Substrate is bound at residue histidine 221. Ni(2+) contacts are provided by histidine 248 and histidine 274. The active-site Proton donor is the histidine 322. Position 362 (aspartate 362) interacts with Ni(2+).

Belongs to the metallo-dependent hydrolases superfamily. Urease alpha subunit family. In terms of assembly, heterotrimer of UreA (gamma), UreB (beta) and UreC (alpha) subunits. Three heterotrimers associate to form the active enzyme. Requires Ni cation as cofactor. Carboxylation allows a single lysine to coordinate two nickel ions.

The protein resides in the cytoplasm. The enzyme catalyses urea + 2 H2O + H(+) = hydrogencarbonate + 2 NH4(+). It functions in the pathway nitrogen metabolism; urea degradation; CO(2) and NH(3) from urea (urease route): step 1/1. The polypeptide is Urease subunit alpha (Paracoccus denitrificans (strain Pd 1222)).